The sequence spans 269 residues: Flagellar brake protein YcgR (269 aa).

Residues 134-254 (QRRNFYRVTT…SRLLIQRYIT (121 aa)) form the PilZ domain.

It belongs to the YcgR family. In terms of assembly, monomer. Interacts with the flagellar basal bodies.

It localises to the bacterial flagellum basal body. Functionally, acts as a flagellar brake, regulating swimming and swarming in a bis-(3'-5') cyclic diguanylic acid (c-di-GMP)-dependent manner. Binds 1 c-di-GMP dimer per subunit. Increasing levels of c-di-GMP lead to decreased motility. The chain is Flagellar brake protein YcgR from Nitrosomonas eutropha (strain DSM 101675 / C91 / Nm57).